Here is a 284-residue protein sequence, read N- to C-terminus: Nucleotide-binding protein VSAL_I0495 (284 aa).

8-15 (GNSGAGKS) contacts ATP. 56–59 (DIRN) provides a ligand contact to GTP.

The protein belongs to the RapZ-like family.

Its function is as follows. Displays ATPase and GTPase activities. This is Nucleotide-binding protein VSAL_I0495 from Aliivibrio salmonicida (strain LFI1238) (Vibrio salmonicida (strain LFI1238)).